The primary structure comprises 275 residues: Formamidopyrimidine-DNA glycosylase (275 aa).

Pro2 acts as the Schiff-base intermediate with DNA in catalysis. The Proton donor role is filled by Glu3. Lys58 (proton donor; for beta-elimination activity) is an active-site residue. DNA-binding residues include His91 and Arg110. The segment at 238-272 adopts an FPG-type zinc-finger fold; that stretch reads QVYGQTGKPCPRCGQAIVKLKVGGRGTHICPKCQK. The active-site Proton donor; for delta-elimination activity is the Arg262.

This sequence belongs to the FPG family. In terms of assembly, monomer. Zn(2+) serves as cofactor.

The enzyme catalyses Hydrolysis of DNA containing ring-opened 7-methylguanine residues, releasing 2,6-diamino-4-hydroxy-5-(N-methyl)formamidopyrimidine.. The catalysed reaction is 2'-deoxyribonucleotide-(2'-deoxyribose 5'-phosphate)-2'-deoxyribonucleotide-DNA = a 3'-end 2'-deoxyribonucleotide-(2,3-dehydro-2,3-deoxyribose 5'-phosphate)-DNA + a 5'-end 5'-phospho-2'-deoxyribonucleoside-DNA + H(+). In terms of biological role, involved in base excision repair of DNA damaged by oxidation or by mutagenic agents. Acts as a DNA glycosylase that recognizes and removes damaged bases. Has a preference for oxidized purines, such as 7,8-dihydro-8-oxoguanine (8-oxoG). Has AP (apurinic/apyrimidinic) lyase activity and introduces nicks in the DNA strand. Cleaves the DNA backbone by beta-delta elimination to generate a single-strand break at the site of the removed base with both 3'- and 5'-phosphates. The protein is Formamidopyrimidine-DNA glycosylase of Streptococcus pyogenes serotype M6 (strain ATCC BAA-946 / MGAS10394).